The sequence spans 130 residues: Ribosome-binding factor A (130 aa).

It belongs to the RbfA family. Monomer. Binds 30S ribosomal subunits, but not 50S ribosomal subunits or 70S ribosomes.

Its subcellular location is the cytoplasm. Functionally, one of several proteins that assist in the late maturation steps of the functional core of the 30S ribosomal subunit. Associates with free 30S ribosomal subunits (but not with 30S subunits that are part of 70S ribosomes or polysomes). Required for efficient processing of 16S rRNA. May interact with the 5'-terminal helix region of 16S rRNA. The sequence is that of Ribosome-binding factor A from Prochlorococcus marinus (strain AS9601).